Reading from the N-terminus, the 771-residue chain is Chaperone protein dnaK3 (771 aa).

T198 carries the phosphothreonine; by autocatalysis modification. The interval 624 to 771 is disordered; that stretch reads FDDDDDYYNR…GWDDDDDDWF (148 aa). Basic and acidic residues-rich tracts occupy residues 630–652 and 708–734; these read YYNR…RYDD and YDDR…RENA.

This sequence belongs to the heat shock protein 70 family.

In terms of biological role, acts as a chaperone. The polypeptide is Chaperone protein dnaK3 (dnaK3) (Synechocystis sp. (strain ATCC 27184 / PCC 6803 / Kazusa)).